A 276-amino-acid chain; its full sequence is Halorhodopsin (276 aa).

The propeptide occupies 1–21; it reads MTAVSTTATTVLQATQSDVLQ. Residues 22-25 are Extracellular-facing; the sequence is EIQS. The chain crosses the membrane as a helical span at residues 26-51; it reads NFLLNSSIWVNIALAGVVILLFVAMG. Residues 52 to 57 are Cytoplasmic-facing; that stretch reads RDLESP. Residues 58-81 form a helical membrane-spanning segment; that stretch reads RAKLIWVATMLVPLVSISSYAGLA. Topologically, residues 82–105 are extracellular; it reads SGLTVGFLQMPPGHALAGQEVLSP. Residues 106 to 127 traverse the membrane as a helical segment; it reads WGRYLTWTFSTPMILLALGLLA. The Cytoplasmic portion of the chain corresponds to 128 to 130; that stretch reads DTD. The chain crosses the membrane as a helical span at residues 131–154; it reads IASLFTAITMDIGMCVTGLAAALI. At 155 to 157 the chain is on the extracellular side; it reads TSS. The chain crosses the membrane as a helical span at residues 158–180; that stretch reads HLLRWVFYGISCAFFVAVLYVLL. Over 181-192 the chain is Cytoplasmic; that stretch reads VQWPADAEAAGT. The helical transmembrane segment at 193–216 threads the bilayer; that stretch reads SEIFGTLKILTVVLWLGYPILWAL. At 217-225 the chain is on the extracellular side; it reads GSEGVALLS. A helical membrane pass occupies residues 226 to 254; it reads VGVTSWGYSGLDILAKYVFAFLLLRWVAA. The residue at position 241 (Lys241) is an N6-(retinylidene)lysine. Residues 255–276 lie on the Cytoplasmic side of the membrane; it reads NEGTVSGSGMGIGSGGAAPADD.

This sequence belongs to the archaeal/bacterial/fungal opsin family.

It localises to the cell membrane. Functionally, light-driven anion pump. The protein is Halorhodopsin of Halobacterium halobium (strain shark).